Reading from the N-terminus, the 525-residue chain is Protein disulfide-isomerase A2 (525 aa).

The signal sequence occupies residues 1–21 (MSCQLLPVLLLLLLRASCPWG). Residues 27–152 (RSPSEEPPEE…IAEWLRRRVG (126 aa)) enclose the Thioredoxin 1 domain. Catalysis depends on nucleophile residues C71 and C74. A disulfide bridge links C71 with C74. N-linked (GlcNAc...) asparagine glycosylation is found at N127 and N284. A Thioredoxin 2 domain is found at 367–496 (VLNGQVKPYL…FSKFLDNGGV (130 aa)). Active-site nucleophile residues include C418 and C421. Cysteines 418 and 421 form a disulfide. A disordered region spans residues 498-525 (PTEEPLEEPAAPFPEPPANSTMGSKEEL). N516 carries N-linked (GlcNAc...) asparagine glycosylation. Residues 516–525 (NSTMGSKEEL) show a composition bias toward polar residues. Residues 522-525 (KEEL) carry the Prevents secretion from ER motif.

This sequence belongs to the protein disulfide isomerase family. In terms of assembly, monomer; predominantly as monomer under reducing conditions. Homodimer; disulfide-linked. Part of a large chaperone multiprotein complex comprising DNAJB11, HSP90B1, HSPA5, HYOU, PDIA2, PDIA4, PDIA6, PPIB, SDF2L1, UGGT1 and very small amounts of ERP29, but not, or at very low levels, CALR nor CANX. In terms of processing, the disulfide-linked homodimer exhibits an enhanced chaperone activity. Glycosylated.

The protein localises to the endoplasmic reticulum lumen. The enzyme catalyses Catalyzes the rearrangement of -S-S- bonds in proteins.. Acts as an intracellular estrogen-binding protein. May be involved in modulating cellular levels and biological functions of estrogens in the pancreas. May act as a chaperone that inhibits aggregation of misfolded proteins. This is Protein disulfide-isomerase A2 (PDIA2) from Pongo abelii (Sumatran orangutan).